The following is a 238-amino-acid chain: ATP-dependent dethiobiotin synthetase BioD (238 aa).

12 to 17 is an ATP binding site; the sequence is EVGKTV. Thr-16 lines the Mg(2+) pocket. Lys-37 is an active-site residue. A substrate-binding site is contributed by Thr-41. ATP-binding positions include Asp-50, 109–112, 170–171, and 200–202; these read EGAG, GS, and PAG. Mg(2+)-binding residues include Asp-50 and Glu-109.

It belongs to the dethiobiotin synthetase family. In terms of assembly, homodimer. The cofactor is Mg(2+).

Its subcellular location is the cytoplasm. It catalyses the reaction (7R,8S)-7,8-diammoniononanoate + CO2 + ATP = (4R,5S)-dethiobiotin + ADP + phosphate + 3 H(+). The protein operates within cofactor biosynthesis; biotin biosynthesis; biotin from 7,8-diaminononanoate: step 1/2. Catalyzes a mechanistically unusual reaction, the ATP-dependent insertion of CO2 between the N7 and N8 nitrogen atoms of 7,8-diaminopelargonic acid (DAPA, also called 7,8-diammoniononanoate) to form a ureido ring. The chain is ATP-dependent dethiobiotin synthetase BioD from Streptomyces coelicolor (strain ATCC BAA-471 / A3(2) / M145).